Reading from the N-terminus, the 262-residue chain is Vibriobactin-specific 2,3-dihydro-2,3-dihydroxybenzoate dehydrogenase (262 aa).

NAD(+) is bound at residue 12 to 36; the sequence is LLVGSARGIGFSVLEHLLQAGAQVM. Serine 145 provides a ligand contact to substrate. Residue tyrosine 158 is the Proton acceptor of the active site.

It belongs to the short-chain dehydrogenases/reductases (SDR) family.

It catalyses the reaction (2S,3S)-2,3-dihydroxy-2,3-dihydrobenzoate + NAD(+) = 2,3-dihydroxybenzoate + NADH + H(+). It participates in siderophore biosynthesis; vibriobactin biosynthesis. Involved in an early step of the biosynthesis of the catechol siderophore vibriobactin. Vibriobactin is a chelating compound involved in transporting iron from the bacterial environment into the cell cytoplasm. In Vibrio cholerae serotype O1 (strain ATCC 39315 / El Tor Inaba N16961), this protein is Vibriobactin-specific 2,3-dihydro-2,3-dihydroxybenzoate dehydrogenase (vibA).